The following is a 1171-amino-acid chain: Protein WWC2 (1171 aa).

2 WW domains span residues 9-42 (LPLPDGWEEARDYDGKVFYIDHNSRQTSWIDPRD) and 56-89 (NELPWGWESSYDPQIGVYFINHINQTTQIEDPRK). Coiled coils occupy residues 120–193 (KEQR…YKEQ), 223–257 (ELKSIRKAISTGEKEKQDLMQSLVKLKERFHLEEA), and 301–420 (LAEK…KSAT). 2 disordered regions span residues 521-552 (SPTAQQDTQDAKPPKSVTSLSSLSSLSSLSPP) and 603-637 (QALAERKSTGEGLRHQSSASQEGRTDIEFPRKNPD). Low complexity predominate over residues 534-551 (PKSVTSLSSLSSLSSLSP). Basic and acidic residues-rich tracts occupy residues 606–616 (AERKSTGEGLR) and 625–637 (GRTDIEFPRKNPD). Residues 684–806 (GAAQAQLILR…FSNDVHTQWY (123 aa)) enclose the C2 domain. Coiled coils occupy residues 836 to 870 (LDLDAVSALLERTSAELEAVEQELAQEDDDQEQLC) and 1047 to 1123 (DLEL…NAEK).

This sequence belongs to the WWC family.

The protein localises to the cytoplasm. The protein resides in the cytosol. In terms of biological role, negative regulator of the Hippo signaling pathway, also known as the Salvador-Warts-Hippo (SWH) pathway. The sequence is that of Protein WWC2 (wwc2) from Xenopus tropicalis (Western clawed frog).